The primary structure comprises 2228 residues: MNMSRQGIFQTVGSGLDHILSLADVEEEQMIQSVDRTAVTGASYFTSVDQSSVHTAEVGSHQPEPLKTSVDKPGSKRTQGEKFFLIHSADWLTTHALFHEVAKLDVVKLLYNEQFAVQGLLRYHTYARFGIEIQVQINPTPFQQGGLICAMVPGDQSYGSIASLTVYPHGLLNCNINNVVRIKVPFIYTRGAYHFKDPQYPVWELTIRVWSELNIGTGTSAYTSLNVLARFTDLELHGLTPLSTQMMRNEFRVSTTENVVNLSNYEDARAKMSFALDQEDWKSDASQGGGIKITHFTTWTSIPTLAAQFPFNASDSVGQQIKVIPVDPYFFQMTNTNPEQKCITALASICQMFCFWRGDLVFDFQVFPTKYHSGRLLFCFVPGNELIDVSHITLKQATTAPCAVMDITGVQSTLRFRVPWISDTPYRVNRYTKSSHQKGEYTAIGKLIVYCYNRLTSPSNVASHVRVNVYLSAINLECFAPLYHAMDVTTQVGDDSGGFSTTVSTKQNVPDPQVGITTVKDLKGRANQGKMDISGVQAPVGAITTIEDPVLAKKVPETFPELKPGESRHTSDHMSIYKFMGRSHFLCTFTFNSNNKEYTFPITLSSTSNPPHGLPSTLRWFFNLFQLYRGPLDLTIIITGATDVDGMAWFTPVGLAVDTPWVEKESALSIDYKTALGAVRFNTRRTGNIQIRLPWYSYLYAVSGALDGLGDKTDSTFGLVSIQIANYNHSDEYLSFSCYLSVTEQSEFYFPRAPLNTNAMMSSETMMDRIALGDLESSVDDPRSEEDRKFESHIEKRKPYKELRLEVGKQRLKYAQEELSNEVLPPPRKIKGVFSQAKISLFYTEDHEIMKFSWKGITADTRALRRFGFSLAAGRSVWTLEMDAGVLTGRLVRVNDEKWTEMKDDKIVSLVEKFTSNKHWSKVNFPHGMLDLEEIAANAKEFPNMSETDLCFLLHWLNPKKINLADRMLGLSGIQEIKEKGVGLIGECRAFLDSITSTLKSMMFGFHHSVTVEIINTVLCFVKSGILLYVIQQLNQEEHSHIIGLLRVMNYADIGCSVISCGKVFSKMLETVFNWQMDSRMMELRTQSISNWLRDICSGITIFKSFKDAIYWLYTKIREYYDLNYGNKKDVLNILKDHQQKIERAIEEADNFCVLQIQDVEKFEQYQKGVDLIQKLRTVHSMAQVDPGLTVHLAPLRDCIARVHQKLKNLGSINQAMVPRCEPVVCYLYGKRGGGKSLTSIALATKICKHYGVEPEKNIYTKPVASDYWDGYSGQLVCIIDDIGQNTTDEDWSDFCQLVSGCPMRLNMASLEEKGRHFSSPFIIATSNWSNPSPKTVYVKEAIDRRLHFKVEVKPASFFKNPHNDMLNVNLAKTNDAIKDMSCVDLVMDNHNVSLSELLSSLVMTVEIRKQNMSEFMELWSQGLSDDDNDSAVAEFFQSFPSGEPSGSRLSQFFQSVTNHKWVAVGAAVGVLGVLVGGWYVYKHFTKKQEESIPSEGVYHGVTKPKQVIKLDADPVESQSTLEIAGLVRKNLVQFGVGEKNGCVRWVMNALGIKDDWLLVPSHAYKFEKDYEMMEFYFNRGGTYYSISAGNVVIQSLDVGFQDVVLMKVPTIPKFRDITEHFIKKSDVPRALNRLATLVTTVNGTPMLISEGPLKMEEKATYVHKKNDGTTIDLTVDQAWRGKGEGLPGMCGGALISSNQSIQNAILGIHVAGGNSILVAKLVTQEMFQNIDKKIVESQRIMKVEFTQCSMNVVSKTLFRKSPIHHHIDKNMINFPAVMPFSRAEIDPMAVMLSKYSLPIVDEPDDYKDVSVFFQNKILGKSPLVDDFLDIEMAITGAPGIDAINMDSSPGYPYVQEKLTKRDLIWLDDNGMFLGLHPRLAQRILFNTTMMENCSDLDVVFTTCPKDELRPLDKVLESKTRAIDSCPLDYTILCRMYWGPAISYFHLNPGFHTGVAIGIDPDRQWDQLFKTMIRFGDVGLDLDFSAFDASLSPFMIREAGRILTEMSGAPVHFGEALINTIIYSKHLLYNCCYHVCGSMPSGSPCTALLNSIINNVNLYYVFSKIFKKSPVFFCDAVRILCYGDDVLIVFSRQVQIDNLDSIGQRIVDEFKKLGMTATSADKSVPQLKPVSELTFLKRSFNLVEDRIRPAIAEKTIWSLVAWQRNNAEFEQNLENAQWFAFMHGYEFYQQFYHFVQSCLEKEMIEYRLKSYDWWRMKFNDQCFVCDLS.

Residues 55 to 76 are disordered; it reads TAEVGSHQPEPLKTSVDKPGSK. 2 short sequence motifs ((L)YPX(n)L motif) span residues 167 to 171 and 200 to 205; these read YPHGL and YPVWEL. Residues 766-836 are involved in P1-2A pentamerization; sequence MMDRIALGDL…PRKIKGVFSQ (71 aa). The helical transmembrane segment at 1011-1031 threads the bilayer; the sequence is TVEIINTVLCFVKSGILLYVI. Positions 1043 to 1070 are membrane-penetrating ability; the sequence is IGLLRVMNYADIGCSVISCGKVFSKMLE. Residues 1127–1153 adopt a coiled-coil conformation; sequence NKKDVLNILKDHQQKIERAIEEADNFC. The 163-residue stretch at 1204–1366 folds into the SF3 helicase domain; that stretch reads HQKLKNLGSI…SFFKNPHNDM (163 aa). 1230-1237 is an ATP binding site; sequence GKRGGGKS. A helical membrane pass occupies residues 1462–1482; sequence WVAVGAAVGVLGVLVGGWYVY. Tyr-1499 bears the O-(5'-phospho-RNA)-tyrosine mark. A Peptidase C3 domain is found at 1514–1728; sequence DPVESQSTLE…VAKLVTQEMF (215 aa). Active-site for protease 3C activity residues include His-1563, Asp-1603, and Cys-1691. The RdRp catalytic domain maps to 1977-2098; sequence DVGLDLDFSA…VFSRQVQIDN (122 aa).

This sequence belongs to the picornaviridae polyprotein family. Homodimer. Homomultimer; probably interacts with membranes in a multimeric form. Seems to assemble into amyloid-like fibers. In terms of assembly, homodimer. Monomer. Interacts with protein 3CD. As to quaternary structure, interacts with host ACBD3. Interacts with protein 3AB. In terms of assembly, interacts with human MAVS. As to quaternary structure, homodimer; disulfide-linked. Homopentamer. Homooligomer. In terms of assembly, interacts with capsid protein VP2. Interacts with capsid protein VP3. As to quaternary structure, interacts with capsid protein VP1. Interacts with capsid protein VP3. Interacts with capsid protein VP1. Interacts with capsid protein VP2. Post-translationally, specific enzymatic cleavages by viral protease in vivo yield a variety of precursors and mature proteins. Polyprotein processing intermediates are produced, such as P1-2A which is a functional precursor of the structural proteins, VP0 which is a VP4-VP2 precursor, VP1-2A precursor, 3ABC precursor which is a stable and catalytically active precursor of 3A, 3B and 3C proteins, 3AB and 3CD precursors. The assembly signal 2A is removed from VP1-2A by a host protease, possibly host Cathepsin L. This cleavage occurs over a region of 3 amino-acids probably generating VP1 proteins with heterogeneous C-termini. In terms of processing, during virion maturation, immature virions are rendered infectious following cleavage of VP0 into VP4 and VP2. This maturation seems to be an autocatalytic event triggered by the presence of RNA in the capsid and is followed by a conformational change of the particle. The assembly signal 2A is removed from VP1-2A by a host protease, possibly host Cathepsin L in naked virions. This cleavage does not occur in enveloped virions. This cleavage occurs over a region of 3 amino-acids probably generating VP1 proteins with heterogeneous C-termini. Post-translationally, VPg is uridylylated prior to priming replication into VPg-pUpU. In terms of processing, unlike other picornaviruses, does not seem to be myristoylated.

The protein localises to the virion. It localises to the host endosome. Its subcellular location is the host multivesicular body. It is found in the host membrane. The protein resides in the host mitochondrion outer membrane. The protein localises to the host cytoplasm. It localises to the host cytoplasmic vesicle membrane. The enzyme catalyses RNA(n) + a ribonucleoside 5'-triphosphate = RNA(n+1) + diphosphate. It catalyses the reaction a ribonucleoside 5'-triphosphate + H2O = a ribonucleoside 5'-diphosphate + phosphate + H(+). The catalysed reaction is Selective cleavage of Gln-|-Gly bond in the poliovirus polyprotein. In other picornavirus reactions Glu may be substituted for Gln, and Ser or Thr for Gly.. Functionally, capsid proteins VP1, VP2, and VP3 form a closed capsid enclosing the viral positive strand RNA genome. All these proteins contain a beta-sheet structure called beta-barrel jelly roll. Together they form an icosahedral capsid (T=3) composed of 60 copies of each VP1, VP2, and VP3, with a diameter of approximately 300 Angstroms. VP1 is situated at the 12 fivefold axes, whereas VP2 and VP3 are located at the quasi-sixfold axes. The naked capsid interacts with the host receptor HAVCR1 to provide virion attachment to and probably entry into the target cell. In terms of biological role, VP0 precursor is a component of the immature procapsids. Its function is as follows. Plays a role in the assembly of the 12 pentamers into an icosahedral structure. Has not been detected in mature virions, supposedly owing to its small size. Precursor component of immature procapsids that corresponds to an extended form of the structural protein VP1. After maturation, possibly by the host Cathepsin L, the assembly signal 2A is cleaved to give rise to the mature VP1 protein. Functionally, functions as a viroporin. Affects membrane integrity and causes an increase in membrane permeability. Involved in host intracellular membrane rearrangements probably to give rise to the viral factories. Does not disrupt calcium homeostasis or glycoprotein trafficking. Antagonizes the innate immune response of the host by suppressing IFN-beta synthesis, which it achieves by interfering with the RIG-I/IFIH1 pathway. In terms of biological role, affects membrane integrity and causes an increase in membrane permeability. Its function is as follows. Associates with and induces structural rearrangements of intracellular membranes. Displays RNA-binding activity. The precursor 3ABC is targeted to the mitochondrial membrane where protease 3C activity cleaves and inhibits the host antiviral protein MAVS, thereby disrupting activation of IRF3 through the IFIH1/MDA5 pathway. In vivo, the protease activity of 3ABC precursor is more efficient in cleaving the 2BC precursor than that of protein 3C. The 3ABC precursor may therefore play a role in the proteolytic processing of the polyprotein. Possible viroporin. Functionally, interacts with the 3CD precursor and with RNA structures found at both the 5'- and 3'-termini of the viral genome. Since the 3AB precursor contains the hydrophobic domain 3A, it probably anchors the whole viral replicase complex to intracellular membranes on which viral RNA synthesis occurs. In terms of biological role, may serve as membrane anchor to the 3AB and 3ABC precursors via its hydrophobic domain. May interact with RNA. Its function is as follows. Acts as a primer for viral RNA replication and remains covalently bound to viral genomic RNA. VPg is uridylylated prior to priming replication into VPg-pUpU. The VPg-pUpU is then used as primer on the genomic RNA poly(A) by the RNA-dependent RNA polymerase to replicate the viral genome. Cysteine protease that generates mature viral proteins from the precursor polyprotein. In addition to its proteolytic activity, it binds to viral RNA, and thus influences viral genome replication. RNA and substrate bind cooperatively to the protease. Cleaves IKBKG/NEMO to impair innate immune signaling. Cleaves host PABPC1 which may participate in the switch of viral translation to RNA synthesis. Functionally, interacts with the 3AB precursor and with RNA structures found at both the 5'- and 3'-termini of the viral genome. Disrupts TLR3 signaling by degrading the host adapter protein TICAM1/TRIF. In terms of biological role, RNA-directed RNA polymerase 3D-POL replicates genomic and antigenomic RNA by recognizing replications specific signals. This is Genome polyprotein from Human hepatitis A virus genotype IIIA (isolate NOR-21) (HHAV).